Consider the following 334-residue polypeptide: tRNA-cytidine(32) 2-sulfurtransferase (334 aa).

The short motif at Ser-74 to Ser-79 is the PP-loop motif element. 3 residues coordinate [4Fe-4S] cluster: Cys-149, Cys-152, and Cys-240.

The protein belongs to the TtcA family. In terms of assembly, homodimer. The cofactor is Mg(2+). Requires [4Fe-4S] cluster as cofactor.

The protein localises to the cytoplasm. The enzyme catalyses cytidine(32) in tRNA + S-sulfanyl-L-cysteinyl-[cysteine desulfurase] + AH2 + ATP = 2-thiocytidine(32) in tRNA + L-cysteinyl-[cysteine desulfurase] + A + AMP + diphosphate + H(+). It participates in tRNA modification. Functionally, catalyzes the ATP-dependent 2-thiolation of cytidine in position 32 of tRNA, to form 2-thiocytidine (s(2)C32). The sulfur atoms are provided by the cysteine/cysteine desulfurase (IscS) system. The polypeptide is tRNA-cytidine(32) 2-sulfurtransferase (Burkholderia ambifaria (strain ATCC BAA-244 / DSM 16087 / CCUG 44356 / LMG 19182 / AMMD) (Burkholderia cepacia (strain AMMD))).